The sequence spans 217 residues: Uracil-DNA glycosylase (217 aa).

D62 serves as the catalytic Proton acceptor.

Belongs to the uracil-DNA glycosylase (UDG) superfamily. UNG family.

It is found in the cytoplasm. The catalysed reaction is Hydrolyzes single-stranded DNA or mismatched double-stranded DNA and polynucleotides, releasing free uracil.. Excises uracil residues from the DNA which can arise as a result of misincorporation of dUMP residues by DNA polymerase or due to deamination of cytosine. The protein is Uracil-DNA glycosylase of Streptococcus pyogenes serotype M6 (strain ATCC BAA-946 / MGAS10394).